Reading from the N-terminus, the 416-residue chain is MENRGRNPSFLSLLLLLSLFAIASAKVFFEERFEDGWEKRWVKSEWKKDESMAGEWNYTSGKWNGDANDKGIQTSEDYRFYAISAEFPEFSNKDNTLVFQFSVKHEQKLDCGGGYMKLLSGEVDQKKFGGDTPYSIMFGPDICGYSTKKVHAIFNYNDTNHLIKKDVPCETDQLTHVYTFILRPDATYSILIDNQEKQTGSLYTDWDLLPAKKIKDPEAKKPEDWDDKEFIPDPEDKKPEGYDDIPAEITDPEAKKPEDWDDEEDGEWTAPTIPNPEYKGPWKAKKIKNPNYKGKWKAPMIDNPEFKDDPELYVYPKLRYVGVELWQVKSGTLFDNVLVCDDPEYAKQLAEETWGKQKDAEKAAFEELEKKREEEETKDDPVESDAEDEDEAEADDSDKDDADKSDDKDDDQHDEL.

The first 25 residues, 1 to 25 (MENRGRNPSFLSLLLLLSLFAIASA), serve as a signal peptide directing secretion. Residue asparagine 57 is glycosylated (N-linked (GlcNAc...) asparagine). An intrachain disulfide couples cysteine 111 to cysteine 143. An alpha-D-glucoside-binding residues include tyrosine 115, lysine 117, tyrosine 134, and aspartate 141. Residue asparagine 157 is glycosylated (N-linked (GlcNAc...) asparagine). Tandem repeats lie at residues 197-208 (KQTGSLYTDWDL), 216-227 (DPEAKKPEDWDD), 233-244 (DPEDKKPEGYDD), 251-262 (DPEAKKPEDWDD), 266-276 (GEWTAPTIPNP), 280-290 (GPWKAKKIKNP), and 294-304 (GKWKAPMIDNP). The interval 197 to 262 (KQTGSLYTDW…EAKKPEDWDD (66 aa)) is 4 X approximate repeats. The span at 217-241 (PEAKKPEDWDDKEFIPDPEDKKPEG) shows a compositional bias: basic and acidic residues. Positions 217 to 281 (PEAKKPEDWD…TIPNPEYKGP (65 aa)) are disordered. A 3 X approximate repeats region spans residues 266-304 (GEWTAPTIPNPEYKGPWKAKKIKNPNYKGKWKAPMIDNP). Glutamate 324 contributes to the an alpha-D-glucoside binding site. Residues 351 to 381 (EETWGKQKDAEKAAFEELEKKREEEETKDDP) show a composition bias toward basic and acidic residues. Residues 351-416 (EETWGKQKDA…DKDDDQHDEL (66 aa)) form a disordered region. Residues 382-400 (VESDAEDEDEAEADDSDKD) are compositionally biased toward acidic residues. Basic and acidic residues predominate over residues 401 to 416 (DADKSDDKDDDQHDEL). A Prevents secretion from ER motif is present at residues 413-416 (HDEL).

Belongs to the calreticulin family.

Its subcellular location is the endoplasmic reticulum lumen. Its function is as follows. Molecular calcium-binding chaperone promoting folding, oligomeric assembly and quality control in the ER via the calreticulin/calnexin cycle. This lectin may interact transiently with almost all of the monoglucosylated glycoproteins that are synthesized in the ER. The sequence is that of Calreticulin from Beta vulgaris (Sugar beet).